The sequence spans 436 residues: Adenylosuccinate synthetase (436 aa).

Residues 12–18 (GDEGKGK) and 40–42 (GHT) contribute to the GTP site. Aspartate 13 (proton acceptor) is an active-site residue. Positions 13 and 40 each coordinate Mg(2+). IMP-binding positions include 13-16 (DEGK), 38-41 (NAGH), threonine 128, arginine 142, glutamine 223, threonine 238, and arginine 302. Histidine 41 (proton donor) is an active-site residue. 298-304 (TTTGRRR) lines the substrate pocket. Residues arginine 304, 330-332 (KLD), and 412-414 (SLG) each bind GTP.

The protein belongs to the adenylosuccinate synthetase family. In terms of assembly, homodimer. Requires Mg(2+) as cofactor.

Its subcellular location is the cytoplasm. The enzyme catalyses IMP + L-aspartate + GTP = N(6)-(1,2-dicarboxyethyl)-AMP + GDP + phosphate + 2 H(+). It participates in purine metabolism; AMP biosynthesis via de novo pathway; AMP from IMP: step 1/2. In terms of biological role, plays an important role in the de novo pathway of purine nucleotide biosynthesis. Catalyzes the first committed step in the biosynthesis of AMP from IMP. The sequence is that of Adenylosuccinate synthetase from Prochlorococcus marinus (strain MIT 9312).